A 160-amino-acid polypeptide reads, in one-letter code: Cytochrome b6-f complex subunit 4 (160 aa).

The next 3 membrane-spanning stretches (helical) occupy residues 36–56, 95–115, and 128–148; these read LLYI…GLAV, LLGI…PFIE, and IAMS…IGAC.

The protein belongs to the cytochrome b family. PetD subfamily. As to quaternary structure, the 4 large subunits of the cytochrome b6-f complex are cytochrome b6, subunit IV (17 kDa polypeptide, PetD), cytochrome f and the Rieske protein, while the 4 small subunits are PetG, PetL, PetM and PetN. The complex functions as a dimer.

The protein localises to the cellular thylakoid membrane. Its function is as follows. Component of the cytochrome b6-f complex, which mediates electron transfer between photosystem II (PSII) and photosystem I (PSI), cyclic electron flow around PSI, and state transitions. This is Cytochrome b6-f complex subunit 4 from Prochlorococcus marinus (strain MIT 9301).